Consider the following 233-residue polypeptide: 2-C-methyl-D-erythritol 4-phosphate cytidylyltransferase (233 aa).

The protein belongs to the IspD/TarI cytidylyltransferase family. IspD subfamily.

It carries out the reaction 2-C-methyl-D-erythritol 4-phosphate + CTP + H(+) = 4-CDP-2-C-methyl-D-erythritol + diphosphate. Its pathway is isoprenoid biosynthesis; isopentenyl diphosphate biosynthesis via DXP pathway; isopentenyl diphosphate from 1-deoxy-D-xylulose 5-phosphate: step 2/6. Its function is as follows. Catalyzes the formation of 4-diphosphocytidyl-2-C-methyl-D-erythritol from CTP and 2-C-methyl-D-erythritol 4-phosphate (MEP). This Vibrio atlanticus (strain LGP32) (Vibrio splendidus (strain Mel32)) protein is 2-C-methyl-D-erythritol 4-phosphate cytidylyltransferase.